The primary structure comprises 283 residues: MTDEQERVQPSGVWATAVGVARVRALETERENALFRDPLAQAFATAGGLWPSSPPLPDDEAARRRRLTVSFSIVIRTKFLDDLLQQASASGVRQVVLLGAGMDSRAFRMDWPEGTRLFEVDTAAPLDFKASVLRQERADARCERITVAVDLREDWPGALAAVGHDPAVPTVWIAEGLLIYLPEDAVELLLARISAQSAAGSRMGLTLGSRGVIERFGADAAPGSAASMWVSEMPDDPVGWLAGHGWEADSHTLRERAAAYGRPISTPPQREERPGGLISAVRR.

S-adenosyl-L-methionine is bound by residues Asp121 and 150–151 (DL). The disordered stretch occupies residues 258 to 283 (AAYGRPISTPPQREERPGGLISAVRR).

The protein belongs to the UPF0677 family.

Functionally, exhibits S-adenosyl-L-methionine-dependent methyltransferase activity. This Streptomyces avermitilis (strain ATCC 31267 / DSM 46492 / JCM 5070 / NBRC 14893 / NCIMB 12804 / NRRL 8165 / MA-4680) protein is Putative S-adenosyl-L-methionine-dependent methyltransferase SAV_474/SAV474.